The primary structure comprises 363 residues: 3-isopropylmalate dehydrogenase (363 aa).

An NAD(+)-binding site is contributed by 78–91 (XXXXXXXXXXXXXX). Residues R99, R109, R138, and D227 each coordinate substrate. 3 residues coordinate Mg(2+): D227, D251, and D255. 285–297 (GSAPDIEGKNIAN) contributes to the NAD(+) binding site.

Belongs to the isocitrate and isopropylmalate dehydrogenases family. LeuB type 1 subfamily. In terms of assembly, homodimer. Mg(2+) serves as cofactor. Requires Mn(2+) as cofactor.

The protein resides in the cytoplasm. The catalysed reaction is (2R,3S)-3-isopropylmalate + NAD(+) = 4-methyl-2-oxopentanoate + CO2 + NADH. Its pathway is amino-acid biosynthesis; L-leucine biosynthesis; L-leucine from 3-methyl-2-oxobutanoate: step 3/4. Catalyzes the oxidation of 3-carboxy-2-hydroxy-4-methylpentanoate (3-isopropylmalate) to 3-carboxy-4-methyl-2-oxopentanoate. The product decarboxylates to 4-methyl-2 oxopentanoate. This is 3-isopropylmalate dehydrogenase from Buchnera aphidicola subsp. Uroleucon solidaginis.